The primary structure comprises 338 residues: Mitochondrial amidoxime reducing component 2 (338 aa).

A mitochondrion-targeting transit peptide spans 1-35 (MGSSSSTALARLGLPGQPRSTWLGVAALGLAAVAL). Glycyl lysine isopeptide (Lys-Gly) (interchain with G-Cter in ubiquitin) cross-links involve residues Lys-59, Lys-138, and Lys-144. Lys-156 carries the N6-acetyllysine; alternate modification. Lys-156 participates in a covalent cross-link: Glycyl lysine isopeptide (Lys-Gly) (interchain with G-Cter in ubiquitin); alternate. Glycyl lysine isopeptide (Lys-Gly) (interchain with G-Cter in ubiquitin) cross-links involve residues Lys-173, Lys-187, Lys-289, and Lys-296. Residues 188 to 336 (GRTTKKLYPS…LRVGDPVYRM (149 aa)) enclose the MOSC domain.

As to quaternary structure, component of a complex composed of cytochrome b5, NADH-cytochrome b5 reductase (CYB5R3) and MTARC2. Requires Mo-molybdopterin as cofactor. In terms of processing, ubiquitinated by PRKN during mitophagy, leading to its degradation and enhancement of mitophagy. Deubiquitinated by USP30.

It localises to the mitochondrion outer membrane. Its subcellular location is the peroxisome. The catalysed reaction is N(omega)-hydroxy-L-arginine + 2 Fe(II)-[cytochrome b5] + 2 H(+) = L-arginine + 2 Fe(III)-[cytochrome b5] + H2O. Functionally, catalyzes the reduction of N-oxygenated molecules, acting as a counterpart of cytochrome P450 and flavin-containing monooxygenases in metabolic cycles. As a component of prodrug-converting system, reduces a multitude of N-hydroxylated prodrugs particularly amidoximes, leading to increased drug bioavailability. May be involved in mitochondrial N(omega)-hydroxy-L-arginine (NOHA) reduction, regulating endogenous nitric oxide levels and biosynthesis. Postulated to cleave the N-OH bond of N-hydroxylated substrates in concert with electron transfer from NADH to cytochrome b5 reductase then to cytochrome b5, the ultimate electron donor that primes the active site for substrate reduction. This chain is Mitochondrial amidoxime reducing component 2 (Mtarc2), found in Rattus norvegicus (Rat).